A 246-amino-acid polypeptide reads, in one-letter code: 1-(5-phosphoribosyl)-5-[(5-phosphoribosylamino)methylideneamino] imidazole-4-carboxamide isomerase (246 aa).

Catalysis depends on D8, which acts as the Proton acceptor. Catalysis depends on D131, which acts as the Proton donor.

This sequence belongs to the HisA/HisF family.

Its subcellular location is the cytoplasm. The catalysed reaction is 1-(5-phospho-beta-D-ribosyl)-5-[(5-phospho-beta-D-ribosylamino)methylideneamino]imidazole-4-carboxamide = 5-[(5-phospho-1-deoxy-D-ribulos-1-ylimino)methylamino]-1-(5-phospho-beta-D-ribosyl)imidazole-4-carboxamide. It functions in the pathway amino-acid biosynthesis; L-histidine biosynthesis; L-histidine from 5-phospho-alpha-D-ribose 1-diphosphate: step 4/9. The polypeptide is 1-(5-phosphoribosyl)-5-[(5-phosphoribosylamino)methylideneamino] imidazole-4-carboxamide isomerase (Lactococcus lactis subsp. cremoris (strain SK11)).